The primary structure comprises 382 residues: UDP-N-acetylglucosamine--N-acetylmuramyl-(pentapeptide) pyrophosphoryl-undecaprenol N-acetylglucosamine transferase (382 aa).

UDP-N-acetyl-alpha-D-glucosamine is bound by residues 17 to 19 (TAG), Asn137, Arg179, Ser213, and Gln308.

Belongs to the glycosyltransferase 28 family. MurG subfamily.

The protein resides in the cell membrane. It carries out the reaction di-trans,octa-cis-undecaprenyl diphospho-N-acetyl-alpha-D-muramoyl-L-alanyl-D-glutamyl-meso-2,6-diaminopimeloyl-D-alanyl-D-alanine + UDP-N-acetyl-alpha-D-glucosamine = di-trans,octa-cis-undecaprenyl diphospho-[N-acetyl-alpha-D-glucosaminyl-(1-&gt;4)]-N-acetyl-alpha-D-muramoyl-L-alanyl-D-glutamyl-meso-2,6-diaminopimeloyl-D-alanyl-D-alanine + UDP + H(+). The protein operates within cell wall biogenesis; peptidoglycan biosynthesis. Its function is as follows. Cell wall formation. Catalyzes the transfer of a GlcNAc subunit on undecaprenyl-pyrophosphoryl-MurNAc-pentapeptide (lipid intermediate I) to form undecaprenyl-pyrophosphoryl-MurNAc-(pentapeptide)GlcNAc (lipid intermediate II). The protein is UDP-N-acetylglucosamine--N-acetylmuramyl-(pentapeptide) pyrophosphoryl-undecaprenol N-acetylglucosamine transferase of Rhodococcus opacus (strain B4).